Here is a 147-residue protein sequence, read N- to C-terminus: E3 ubiquitin-protein ligase RNF181 homolog (147 aa).

The RING-type; atypical zinc-finger motif lies at 70–111 (CSVCKEPAEEGQKYRILPCKHEFHEECILLWLKKTNSCPLCR).

This sequence belongs to the RNF181 family.

It carries out the reaction S-ubiquitinyl-[E2 ubiquitin-conjugating enzyme]-L-cysteine + [acceptor protein]-L-lysine = [E2 ubiquitin-conjugating enzyme]-L-cysteine + N(6)-ubiquitinyl-[acceptor protein]-L-lysine.. It participates in protein modification; protein ubiquitination. Functionally, E3 ubiquitin-protein ligase which accepts ubiquitin from an E2 ubiquitin-conjugating enzyme in the form of a thioester and then directly transfers the ubiquitin to targeted substrates. This is E3 ubiquitin-protein ligase RNF181 homolog from Drosophila melanogaster (Fruit fly).